Here is a 77-residue protein sequence, read N- to C-terminus: Putative defensin-like protein 185 (77 aa).

Residues 1–22 (MKNSSILLLLVVFFVISSSGEA) form the signal peptide. 4 disulfides stabilise this stretch: cysteine 25-cysteine 77, cysteine 31-cysteine 54, cysteine 40-cysteine 71, and cysteine 44-cysteine 73.

It belongs to the DEFL family.

It is found in the secreted. The protein is Putative defensin-like protein 185 (LCR39) of Arabidopsis thaliana (Mouse-ear cress).